The chain runs to 160 residues: SsrA-binding protein (160 aa).

A compositionally biased stretch (basic and acidic residues) spans Lys-138–Gln-148. The tract at residues Lys-138–Arg-160 is disordered.

The protein belongs to the SmpB family.

The protein resides in the cytoplasm. Its function is as follows. Required for rescue of stalled ribosomes mediated by trans-translation. Binds to transfer-messenger RNA (tmRNA), required for stable association of tmRNA with ribosomes. tmRNA and SmpB together mimic tRNA shape, replacing the anticodon stem-loop with SmpB. tmRNA is encoded by the ssrA gene; the 2 termini fold to resemble tRNA(Ala) and it encodes a 'tag peptide', a short internal open reading frame. During trans-translation Ala-aminoacylated tmRNA acts like a tRNA, entering the A-site of stalled ribosomes, displacing the stalled mRNA. The ribosome then switches to translate the ORF on the tmRNA; the nascent peptide is terminated with the 'tag peptide' encoded by the tmRNA and targeted for degradation. The ribosome is freed to recommence translation, which seems to be the essential function of trans-translation. In Serratia proteamaculans (strain 568), this protein is SsrA-binding protein.